We begin with the raw amino-acid sequence, 479 residues long: MPPARLRHPHLLLLLLLACQPQAPAAQAMDFLFQKWKLYGDQCLRNLSLLPPPTELVCNRTFDKYSCWPDTPPNTTANISCPWYLPWYHKVQHRLVFKRCGPDGQWVRGPRGQPWRNASQCQVDDEELGVQREVAEMYSSFQAMYTAGYSLSLAALLLALAILLGLSKLHCTRNYIHANLLASFVLRASSVLALDALLKTRYSQRLGDDLSVSIWLSDEAVAGCRVAAVFMQYGVVANYCWLLVEGVYLHSLLRQATIPERSCFPLYLAIGWGAPMLFVIPWAVVKCLFENIQCWTSNDNMGFWWILRFPVFLAILINFSIFIRVLHVLVAKLRAHQMRCTDYKFRLARSTLTLIPLLGVHEVVFAFVTDEHAQGALRSAKLFFDLFLSSFQGLLVAVLYCFLNKEVQAELLRRWHRWREGKALQKAHRVGSHSARPPSGPPSEKLLLSTGGSSNGTSQEPSAETHLASGLPGVAENPF.

The signal sequence occupies residues 1–25 (MPPARLRHPHLLLLLLLACQPQAPA). Residues 26 to 136 (AQAMDFLFQK…ELGVQREVAE (111 aa)) are Extracellular-facing. 3 disulfide bridges follow: cysteine 43/cysteine 67, cysteine 58/cysteine 100, and cysteine 81/cysteine 121. Residues asparagine 46, asparagine 59, asparagine 74, asparagine 78, and asparagine 117 are each glycosylated (N-linked (GlcNAc...) asparagine). Residues 137–161 (MYSSFQAMYTAGYSLSLAALLLALA) form a helical membrane-spanning segment. The Cytoplasmic portion of the chain corresponds to 162–173 (ILLGLSKLHCTR). The helical transmembrane segment at 174 to 198 (NYIHANLLASFVLRASSVLALDALL) threads the bilayer. Topologically, residues 199 to 225 (KTRYSQRLGDDLSVSIWLSDEAVAGCR) are extracellular. The cysteines at positions 224 and 294 are disulfide-linked. A helical transmembrane segment spans residues 226–249 (VAAVFMQYGVVANYCWLLVEGVYL). At 250–263 (HSLLRQATIPERSC) the chain is on the cytoplasmic side. Residues 264–285 (FPLYLAIGWGAPMLFVIPWAVV) traverse the membrane as a helical segment. The Extracellular portion of the chain corresponds to 286–303 (KCLFENIQCWTSNDNMGF). A helical transmembrane segment spans residues 304–326 (WWILRFPVFLAILINFSIFIRVL). Residues 327-350 (HVLVAKLRAHQMRCTDYKFRLARS) lie on the Cytoplasmic side of the membrane. Residues 351–369 (TLTLIPLLGVHEVVFAFVT) form a helical membrane-spanning segment. Over 370 to 381 (DEHAQGALRSAK) the chain is Extracellular. A helical transmembrane segment spans residues 382-402 (LFFDLFLSSFQGLLVAVLYCF). The Cytoplasmic portion of the chain corresponds to 403 to 479 (LNKEVQAELL…GLPGVAENPF (77 aa)). The interval 426-479 (KAHRVGSHSARPPSGPPSEKLLLSTGGSSNGTSQEPSAETHLASGLPGVAENPF) is disordered. Residues 446–458 (LLLSTGGSSNGTS) show a composition bias toward low complexity. Phosphoserine is present on serine 458.

It belongs to the G-protein coupled receptor 2 family. Post-translationally, ligand-binding promotes phosphorylation of serine residues in the C-terminal cytoplasmic domain. Phosphorylation is important for receptor endocytosis after ligand-binding.

The protein resides in the cell membrane. G-protein coupled receptor for glucagon that plays a central role in the regulation of blood glucose levels and glucose homeostasis. Regulates the rate of hepatic glucose production by promoting glycogen hydrolysis and gluconeogenesis. Plays an important role in mediating the responses to fasting. Ligand binding causes a conformation change that triggers signaling via guanine nucleotide-binding proteins (G proteins) and modulates the activity of down-stream effectors, such as adenylate cyclase. Promotes activation of adenylate cyclase. Besides, plays a role in signaling via a phosphatidylinositol-calcium second messenger system. This chain is Glucagon receptor, found in Sus scrofa (Pig).